The primary structure comprises 82 residues: MPKVGVEQSLTAISEELRGMGYDVVQLKQEQDAQGCDCCVITGQDQNVMGIQNAVTQGAVINASGLTAEEVCQQVDQRLRQQ.

This sequence belongs to the UPF0180 family.

In Halalkalibacterium halodurans (strain ATCC BAA-125 / DSM 18197 / FERM 7344 / JCM 9153 / C-125) (Bacillus halodurans), this protein is UPF0180 protein BH2667.